Consider the following 180-residue polypeptide: Large ribosomal subunit protein uL5 (180 aa).

Belongs to the universal ribosomal protein uL5 family. Part of the 50S ribosomal subunit; part of the 5S rRNA/L5/L18/L25 subcomplex. Contacts the 5S rRNA and the P site tRNA. Forms a bridge to the 30S subunit in the 70S ribosome.

Functionally, this is one of the proteins that bind and probably mediate the attachment of the 5S RNA into the large ribosomal subunit, where it forms part of the central protuberance. In the 70S ribosome it contacts protein S13 of the 30S subunit (bridge B1b), connecting the 2 subunits; this bridge is implicated in subunit movement. Contacts the P site tRNA; the 5S rRNA and some of its associated proteins might help stabilize positioning of ribosome-bound tRNAs. This chain is Large ribosomal subunit protein uL5, found in Stenotrophomonas maltophilia (strain R551-3).